The primary structure comprises 454 residues: Bifunctional protein GlmU (454 aa).

Positions methionine 1–arginine 226 are pyrophosphorylase. UDP-N-acetyl-alpha-D-glucosamine contacts are provided by residues leucine 8–glycine 11, lysine 22, glutamine 73, glycine 78–threonine 79, tyrosine 100–aspartate 102, glycine 137, glutamate 151, asparagine 166, and asparagine 224. Aspartate 102 is a binding site for Mg(2+). Residue asparagine 224 participates in Mg(2+) binding. The linker stretch occupies residues valine 227 to alanine 247. Residues glycine 248–lysine 454 are N-acetyltransferase. UDP-N-acetyl-alpha-D-glucosamine contacts are provided by arginine 330 and lysine 348. Residue histidine 360 is the Proton acceptor of the active site. UDP-N-acetyl-alpha-D-glucosamine contacts are provided by tyrosine 363 and asparagine 374. Acetyl-CoA is bound by residues alanine 377, asparagine 383–tyrosine 384, serine 402, alanine 420, and arginine 437.

The protein in the N-terminal section; belongs to the N-acetylglucosamine-1-phosphate uridyltransferase family. In the C-terminal section; belongs to the transferase hexapeptide repeat family. In terms of assembly, homotrimer. Mg(2+) serves as cofactor.

It is found in the cytoplasm. The enzyme catalyses alpha-D-glucosamine 1-phosphate + acetyl-CoA = N-acetyl-alpha-D-glucosamine 1-phosphate + CoA + H(+). The catalysed reaction is N-acetyl-alpha-D-glucosamine 1-phosphate + UTP + H(+) = UDP-N-acetyl-alpha-D-glucosamine + diphosphate. Its pathway is nucleotide-sugar biosynthesis; UDP-N-acetyl-alpha-D-glucosamine biosynthesis; N-acetyl-alpha-D-glucosamine 1-phosphate from alpha-D-glucosamine 6-phosphate (route II): step 2/2. It functions in the pathway nucleotide-sugar biosynthesis; UDP-N-acetyl-alpha-D-glucosamine biosynthesis; UDP-N-acetyl-alpha-D-glucosamine from N-acetyl-alpha-D-glucosamine 1-phosphate: step 1/1. It participates in bacterial outer membrane biogenesis; LPS lipid A biosynthesis. In terms of biological role, catalyzes the last two sequential reactions in the de novo biosynthetic pathway for UDP-N-acetylglucosamine (UDP-GlcNAc). The C-terminal domain catalyzes the transfer of acetyl group from acetyl coenzyme A to glucosamine-1-phosphate (GlcN-1-P) to produce N-acetylglucosamine-1-phosphate (GlcNAc-1-P), which is converted into UDP-GlcNAc by the transfer of uridine 5-monophosphate (from uridine 5-triphosphate), a reaction catalyzed by the N-terminal domain. The chain is Bifunctional protein GlmU from Shewanella amazonensis (strain ATCC BAA-1098 / SB2B).